We begin with the raw amino-acid sequence, 315 residues long: MSSEVETSEGVDESENNSTAPEKENHTKMADLSELLKEGTKEAHDRAENTQFVKDFLKGNIKKELFKLATTALYFTYSALEEEMDRNKDHPAFAPLYFPTELHRKEALIKDMEYFFGENWEEQVKCSEAAQKYVDRIHYVGQNEPELLVAHAYTRYMGDLSGGQVLKKVAQRALKLPSTGEGTQFYLFEHVDNAQQFKQFYRARMNALDLSMKTKERIVEEANKAFEYNMQIFSELDQAGSMLTKETLEDGLPVHDGKGDVRKCPFYAAQPDKGTLGGSNCPFRTAMAVLRKPSLQLILAASVALVAGLLAWYYM.

Over residues 1–15 the composition is skewed to polar residues; sequence MSSEVETSEGVDESE. The tract at residues 1–29 is disordered; the sequence is MSSEVETSEGVDESENNSTAPEKENHTKM. Ser-2 bears the N-acetylserine mark. At Ser-2 the chain carries Phosphoserine. Residues 2–294 lie on the Cytoplasmic side of the membrane; the sequence is SSEVETSEGV…TAMAVLRKPS (293 aa). The heme b site is built by His-44, Tyr-153, Lys-198, and Arg-202. HRM repeat units lie at residues 263–268 and 280–285; these read KCPFYA and NCPFRT. An S-nitrosocysteine mark is found at Cys-264 and Cys-281. A helical; Anchor for type IV membrane protein transmembrane segment spans residues 295–315; it reads LQLILAASVALVAGLLAWYYM.

It belongs to the heme oxygenase family. A soluble form arises by proteolytic removal of the membrane anchor. Post-translationally, S-nitrosylated by BLVRB. In terms of tissue distribution, widely distributed in body with a high concentration in the brain.

Its subcellular location is the microsome membrane. It is found in the endoplasmic reticulum membrane. The enzyme catalyses heme b + 3 reduced [NADPH--hemoprotein reductase] + 3 O2 = biliverdin IXalpha + CO + Fe(2+) + 3 oxidized [NADPH--hemoprotein reductase] + 3 H2O + H(+). Its activity is regulated as follows. Inhibited by metalloporphyrins such as Sn- and Zn-protoporphyrins. Its function is as follows. Catalyzes the oxidative cleavage of heme at the alpha-methene bridge carbon, released as carbon monoxide (CO), to generate biliverdin IXalpha, while releasing the central heme iron chelate as ferrous iron. In Rattus norvegicus (Rat), this protein is Heme oxygenase 2 (Hmox2).